Consider the following 582-residue polypeptide: Heat shock protein 60, mitochondrial (582 aa).

Residues 1 to 35 (MVSFLSSSVSRLPLRIAGRRIPGRFAVPQVRTYAK) constitute a mitochondrion transit peptide. Residues Ser-77 and Ser-92 each carry the phosphoserine modification. The disordered stretch occupies residues 561–582 (EESKAPAGPPGMGGMGGMPGMM). Over residues 570–582 (PGMGGMGGMPGMM) the composition is skewed to gly residues.

Belongs to the chaperonin (HSP60) family.

The protein resides in the mitochondrion. In terms of biological role, may participate in assembly and/or disassembly of proteins imported into the mitochondrion. HSP60 are ATPases and have affinity for unfolded proteins. In Schizosaccharomyces pombe (strain 972 / ATCC 24843) (Fission yeast), this protein is Heat shock protein 60, mitochondrial (hsp60).